The sequence spans 344 residues: L-rhamnose-proton symporter (344 aa).

Helical transmembrane passes span 4 to 24 (AITM…CFYA), 38 to 58 (WSVG…ALLL), 68 to 88 (FSLS…IGNI), 101 to 121 (MGIG…TPII), 137 to 157 (TLLG…AGQL), 175 to 195 (LVLA…MNAA), 214 to 234 (LPSY…FCFI), 259 to 279 (VLLS…YAWG), 290 to 310 (ISWM…GLVL), and 323 to 343 (VLSL…IGMA).

This sequence belongs to the L-rhamnose transporter (TC 2.A.7.6) family.

Its subcellular location is the cell inner membrane. The catalysed reaction is L-rhamnopyranose(in) + H(+)(in) = L-rhamnopyranose(out) + H(+)(out). Uptake of L-rhamnose across the cytoplasmic membrane with the concomitant transport of protons into the cell (symport system). The protein is L-rhamnose-proton symporter of Shigella flexneri.